The sequence spans 367 residues: DNA replication and repair protein RecF (367 aa).

Residue 30–37 (GANGSGKT) coordinates ATP.

It belongs to the RecF family.

It localises to the cytoplasm. In terms of biological role, the RecF protein is involved in DNA metabolism; it is required for DNA replication and normal SOS inducibility. RecF binds preferentially to single-stranded, linear DNA. It also seems to bind ATP. The protein is DNA replication and repair protein RecF of Pseudomonas syringae pv. syringae (strain B728a).